The following is a 251-amino-acid chain: MKTLLILTILAMAITIGTANMQVDPSSQVQWPQQQPVPQPHQPFSQQPQQTFPQPQQTFPHQPQQQFPQPQQPQQQFLQPQQPFPQQPQQPYPQQPQQPFPQTQQPQQLFPQSQQPQQQFSQPQQQFPQPQQPQQSFPQQQPPFIQPSLQQQVNPCKNFLLQQCKPVSLVSSLWSMIWPQSDCQVMRQQCCQQLAQIPQQLQCAAIHTIIHSIIMQQEQQEQQQGMHILLPLYQQQQVGQGTLVQGQGIIQ.

An N-terminal signal peptide occupies residues 1-19 (MKTLLILTILAMAITIGTA). The disordered stretch occupies residues 26-143 (SSQVQWPQQQ…QQSFPQQQPP (118 aa)). Residues 42 to 81 (QPFSQQPQQTFPQPQQTFPHQPQQQFPQPQQPQQQFLQPQ) show a composition bias toward low complexity. A compositionally biased stretch (pro residues) spans 82–99 (QPFPQQPQQPYPQQPQQP). The segment covering 100 to 139 (FPQTQQPQQLFPQSQQPQQQFSQPQQQFPQPQQPQQSFPQ) has biased composition (low complexity).

It belongs to the gliadin/glutenin family.

Gliadin is the major seed storage protein in wheat. The chain is Gamma-gliadin from Triticum aestivum (Wheat).